Consider the following 107-residue polypeptide: UPF0213 protein SG0387 (107 aa).

One can recognise a GIY-YIG domain in the interval 4 to 79 (SLWHLYLIRT…KQLSRAQKEH (76 aa)).

Belongs to the UPF0213 family.

This Sodalis glossinidius (strain morsitans) protein is UPF0213 protein SG0387.